The sequence spans 176 residues: Late lactation protein (176 aa).

The signal sequence occupies residues 1–18 (MKVLFFTIALSLFSILHA). Cysteines 78 and 171 form a disulfide.

Belongs to the calycin superfamily. Lipocalin family. In terms of tissue distribution, mammary gland. Secreted in milk.

Its subcellular location is the secreted. In terms of biological role, probably serves a role in the transport of a small ligand released during the hydrolysis of milk fat. The protein is Late lactation protein of Trichosurus vulpecula (Brush-tailed possum).